Consider the following 248-residue polypeptide: Ubiquinone biosynthesis O-methyltransferase (248 aa).

Residues R41, G72, D93, and M136 each contribute to the S-adenosyl-L-methionine site.

The protein belongs to the methyltransferase superfamily. UbiG/COQ3 family.

It carries out the reaction a 3-demethylubiquinol + S-adenosyl-L-methionine = a ubiquinol + S-adenosyl-L-homocysteine + H(+). The catalysed reaction is a 3-(all-trans-polyprenyl)benzene-1,2-diol + S-adenosyl-L-methionine = a 2-methoxy-6-(all-trans-polyprenyl)phenol + S-adenosyl-L-homocysteine + H(+). It functions in the pathway cofactor biosynthesis; ubiquinone biosynthesis. Its function is as follows. O-methyltransferase that catalyzes the 2 O-methylation steps in the ubiquinone biosynthetic pathway. The polypeptide is Ubiquinone biosynthesis O-methyltransferase (Rhizobium etli (strain ATCC 51251 / DSM 11541 / JCM 21823 / NBRC 15573 / CFN 42)).